Consider the following 124-residue polypeptide: uncharacterized protein (124 aa).

Positions 1-23 (MHKLLKLLSITLIGLSVATGVQA) are cleaved as a signal peptide.

The protein belongs to the cytochrome b562 family.

This is an uncharacterized protein from Pasteurella multocida (strain Pm70).